The chain runs to 291 residues: MSEIRLFVTTTEKQAAAILDVMSVNFEEEGYAVATMEIDEKRDVWEASVYMMADEEESVKSRLADALAADFSHLPIEREVLPEIDWIAKSLEGLAPVRAGRFVVHGSHDRDKVKTGEIAIEIDAGQAFGTGHHGTTAGCLEMLACVARSRRVRNVLDLGTGSGVLAIAAWKLLHVPGLATDIDPVATRVASDNARRNGVVDGLTFATAPGFHSTAFGTHGPFDLVIANILARPLMKMAPELVAHIAPGGSVILSGILAEQRWKVLAAYNGQRLKHVQTIWKNGWVTIHLTK.

S-adenosyl-L-methionine-binding residues include Thr136, Gly159, Asp181, and Asn228.

Belongs to the methyltransferase superfamily. PrmA family.

The protein resides in the cytoplasm. The catalysed reaction is L-lysyl-[protein] + 3 S-adenosyl-L-methionine = N(6),N(6),N(6)-trimethyl-L-lysyl-[protein] + 3 S-adenosyl-L-homocysteine + 3 H(+). Its function is as follows. Methylates ribosomal protein L11. The sequence is that of Ribosomal protein L11 methyltransferase from Sinorhizobium fredii (strain NBRC 101917 / NGR234).